Reading from the N-terminus, the 179-residue chain is Large ribosomal subunit protein uL5 (179 aa).

The protein belongs to the universal ribosomal protein uL5 family. Part of the 50S ribosomal subunit; part of the 5S rRNA/L5/L18/L25 subcomplex. Contacts the 5S rRNA and the P site tRNA. Forms a bridge to the 30S subunit in the 70S ribosome.

This is one of the proteins that bind and probably mediate the attachment of the 5S RNA into the large ribosomal subunit, where it forms part of the central protuberance. In the 70S ribosome it contacts protein S13 of the 30S subunit (bridge B1b), connecting the 2 subunits; this bridge is implicated in subunit movement. Contacts the P site tRNA; the 5S rRNA and some of its associated proteins might help stabilize positioning of ribosome-bound tRNAs. The chain is Large ribosomal subunit protein uL5 from Vibrio parahaemolyticus serotype O3:K6 (strain RIMD 2210633).